We begin with the raw amino-acid sequence, 58 residues long: Small ribosomal subunit protein bS21 (58 aa).

Positions 35–58 are disordered; that stretch reads REHYEKPSVKRKKKSEAARKRKFK. The segment covering 43–58 has biased composition (basic residues); sequence VKRKKKSEAARKRKFK.

Belongs to the bacterial ribosomal protein bS21 family.

The chain is Small ribosomal subunit protein bS21 from Ruminiclostridium cellulolyticum (strain ATCC 35319 / DSM 5812 / JCM 6584 / H10) (Clostridium cellulolyticum).